The sequence spans 244 residues: Ubiquinone/menaquinone biosynthesis C-methyltransferase UbiE (244 aa).

S-adenosyl-L-methionine is bound by residues threonine 70, aspartate 91, and 117–118 (DA).

It belongs to the class I-like SAM-binding methyltransferase superfamily. MenG/UbiE family.

It carries out the reaction a 2-demethylmenaquinol + S-adenosyl-L-methionine = a menaquinol + S-adenosyl-L-homocysteine + H(+). The catalysed reaction is a 2-methoxy-6-(all-trans-polyprenyl)benzene-1,4-diol + S-adenosyl-L-methionine = a 5-methoxy-2-methyl-3-(all-trans-polyprenyl)benzene-1,4-diol + S-adenosyl-L-homocysteine + H(+). It participates in quinol/quinone metabolism; menaquinone biosynthesis; menaquinol from 1,4-dihydroxy-2-naphthoate: step 2/2. It functions in the pathway cofactor biosynthesis; ubiquinone biosynthesis. Functionally, methyltransferase required for the conversion of demethylmenaquinol (DMKH2) to menaquinol (MKH2) and the conversion of 2-polyprenyl-6-methoxy-1,4-benzoquinol (DDMQH2) to 2-polyprenyl-3-methyl-6-methoxy-1,4-benzoquinol (DMQH2). This is Ubiquinone/menaquinone biosynthesis C-methyltransferase UbiE from Chromobacterium violaceum (strain ATCC 12472 / DSM 30191 / JCM 1249 / CCUG 213 / NBRC 12614 / NCIMB 9131 / NCTC 9757 / MK).